The primary structure comprises 131 residues: Profilin (131 aa).

This sequence belongs to the profilin family. As to quaternary structure, occurs in many kinds of cells as a complex with monomeric actin in a 1:1 ratio.

The protein resides in the cytoplasm. Its subcellular location is the cytoskeleton. Its function is as follows. Binds to actin and affects the structure of the cytoskeleton. At high concentrations, profilin prevents the polymerization of actin, whereas it enhances it at low concentrations. By binding to PIP2, it inhibits the formation of IP3 and DG. This is Profilin from Prunus avium (Cherry).